The chain runs to 148 residues: Probable DNA-directed RNA polymerases I, II, and III subunit RPABC3 (148 aa).

Positions aspartate 16–isoleucine 40 are non-specific ssDNA binding.

The protein belongs to the eukaryotic RPB8 RNA polymerase subunit family. In terms of assembly, component of the RNA polymerase I (Pol I), RNA polymerase II (Pol II) and RNA polymerase III (Pol III) complexes consisting of at least 13, 12 and 17 subunits, respectively. Directly interacts with POLR2A.

It is found in the nucleus. In terms of biological role, DNA-dependent RNA polymerase catalyzes the transcription of DNA into RNA using the four ribonucleoside triphosphates as substrates. Common component of RNA polymerases I, II and III which synthesize ribosomal RNA precursors, mRNA precursors and many functional non-coding RNAs, and small RNAs, such as 5S rRNA and tRNAs, respectively. The sequence is that of Probable DNA-directed RNA polymerases I, II, and III subunit RPABC3 (rpb-8) from Caenorhabditis elegans.